The chain runs to 419 residues: Serine hydroxymethyltransferase (419 aa).

(6S)-5,6,7,8-tetrahydrofolate contacts are provided by residues L122 and 126 to 128 (GHL). K231 is subject to N6-(pyridoxal phosphate)lysine. 354-356 (SPF) provides a ligand contact to (6S)-5,6,7,8-tetrahydrofolate.

The protein belongs to the SHMT family. As to quaternary structure, homodimer. It depends on pyridoxal 5'-phosphate as a cofactor.

The protein resides in the cytoplasm. The catalysed reaction is (6R)-5,10-methylene-5,6,7,8-tetrahydrofolate + glycine + H2O = (6S)-5,6,7,8-tetrahydrofolate + L-serine. It participates in one-carbon metabolism; tetrahydrofolate interconversion. Its pathway is amino-acid biosynthesis; glycine biosynthesis; glycine from L-serine: step 1/1. Its function is as follows. Catalyzes the reversible interconversion of serine and glycine with tetrahydrofolate (THF) serving as the one-carbon carrier. This reaction serves as the major source of one-carbon groups required for the biosynthesis of purines, thymidylate, methionine, and other important biomolecules. Also exhibits THF-independent aldolase activity toward beta-hydroxyamino acids, producing glycine and aldehydes, via a retro-aldol mechanism. The protein is Serine hydroxymethyltransferase of Exiguobacterium sibiricum (strain DSM 17290 / CCUG 55495 / CIP 109462 / JCM 13490 / 255-15).